The following is a 926-amino-acid chain: Staphylococcal nuclease domain-containing protein 1 (926 aa).

Positions 1-17 (MATAANTATAAGAAKDA) are enriched in low complexity. Residues 1-24 (MATAANTATAAGAAKDAPPAPTKS) are disordered. TNase-like domains follow at residues 23–167 (KSLS…KWSP), 195–333 (NPVK…QWQD), 346–505 (KDFS…LHAK), and 535–674 (LRTE…IWTN). In terms of domain architecture, Tudor spans 749 to 807 (TPKRGDLVAAQFTLDNQWYRAKVERVQGSNATVLYIDYGNKETLPTNRLAALPPAFSSE). The segment at 760–788 (FTLDNQWYRAKVERVQGSNATVLYIDYGN) is involved in dimethylarginine binding.

Associates with the RNA-induced silencing complex (RISC). Interacts with the RISC components AGO2, Fmr1 and vig. Interacts with piwi. In terms of tissue distribution, expressed in adult ovaries and testis (at protein level).

It localises to the cytoplasm. The protein resides in the nucleus. The enzyme catalyses Endonucleolytic cleavage to nucleoside 3'-phosphates and 3'-phosphooligonucleotide end-products.. Endonuclease which shows activity towards both DNA and RNA substrates. Has a role in translation regulation throught its association with the with the RNA-induced silencing complex (RISC). Plays a role in spermatogenesis probably by negatively regulating piwi expression in the germline. Together with piwi, might be involved in transposon repression in the germline. The chain is Staphylococcal nuclease domain-containing protein 1 from Drosophila melanogaster (Fruit fly).